A 167-amino-acid polypeptide reads, in one-letter code: Lipoprotein signal peptidase (167 aa).

The next 3 membrane-spanning stretches (helical) occupy residues 9-29 (AWLY…TKNL), 68-88 (LPLL…YALY), and 98-118 (MGLI…LGMV). Catalysis depends on residues Asp120 and Asp138. The chain crosses the membrane as a helical span at residues 130–150 (YWPAFNIADASISIGIALLIL).

This sequence belongs to the peptidase A8 family.

It localises to the cell inner membrane. The catalysed reaction is Release of signal peptides from bacterial membrane prolipoproteins. Hydrolyzes -Xaa-Yaa-Zaa-|-(S,diacylglyceryl)Cys-, in which Xaa is hydrophobic (preferably Leu), and Yaa (Ala or Ser) and Zaa (Gly or Ala) have small, neutral side chains.. The protein operates within protein modification; lipoprotein biosynthesis (signal peptide cleavage). Functionally, this protein specifically catalyzes the removal of signal peptides from prolipoproteins. This chain is Lipoprotein signal peptidase, found in Aquifex aeolicus (strain VF5).